The sequence spans 1046 residues: UDP-N-acetylglucosamine--peptide N-acetylglucosaminyltransferase 110 kDa subunit (1046 aa).

The residue at position 2 (Ala-2) is an N-acetylalanine. Phosphoserine; by GSK3-beta; alternate occurs at positions 3 and 4. 2 O-linked (GlcNAc) serine; alternate glycosylation sites follow: Ser-3 and Ser-4. Residue Asp-10 is glycosylated (O-linked (GlcNAc) serine). Thr-12 is a glycosylation site (O-linked (GlcNAc) threonine). Residue Met-18 is glycosylated (O-linked (GlcNAc) serine). Ser-20 is subject to Phosphoserine. Residues Phe-21–Asn-54 form a TPR 1 repeat. Glu-38 is a glycosylation site (O-linked (GlcNAc) threonine). 2 O-linked (GlcNAc) serine glycosylation sites follow: Pro-52 and Gly-56. 11 TPR repeats span residues Ala-89 to Phe-122, Ile-123 to Leu-156, Tyr-157 to Phe-190, Ala-191 to Phe-224, Leu-225 to His-258, Ala-259 to Phe-292, Pro-293 to His-326, Ala-327 to Phe-360, Ala-361 to Phe-394, Ala-395 to Phe-428, and Ala-429 to Phe-462. A glycan (O-linked (GlcNAc) serine; by autocatalysis) is linked at Ser-399. Phosphothreonine; by AMPK is present on Thr-454. The TPR 13; truncated repeat unit spans residues Pro-463–Leu-473. The DFP motif motif lies at Asp-464–Tyr-466. The Nuclear localization signal signature appears at Lys-487–Pro-503. His-508 acts as the Proton acceptor in catalysis. UDP contacts are provided by residues Gln-849, Lys-852, Ala-906 to Lys-908, His-911 to Arg-914, His-930 to Thr-932, and Asp-935. A Phosphotyrosine modification is found at Tyr-989. The interval Lys-991 to Lys-1010 is required for phosphatidylinositol 3,4,5-triphosphate binding.

It belongs to the glycosyltransferase 41 family. O-GlcNAc transferase subfamily. In terms of assembly, monomer; may exist in different oligomerization states in cells. Homotrimer, oligomerizes via TPR repeats 6 and 7. Trimerization is not necessary for activity in vitro, however it increases affinity for UDP-GlcNAc. Component of a THAP1/THAP3-HCFC1-OGT complex. Component of the NSL complex at least composed of MOF/KAT8, KANSL1, KANSL2, KANSL3, MCRS1, PHF20, OGT1/OGT, WDR5 and HCFC1. Found in a complex with KIF5B, RHOT1, RHOT2 and TRAK1. Found in a complex composed of at least SINHCAF, SIN3A, HDAC1, SAP30, RBBP4, OGT and TET1. Component of a complex composed of KMT2E/MLL5 (isoform 3), OGT (isoform 1) and USP7; the complex stabilizes KMT2E/MLL5, preventing KMT2E/MLL5 ubiquitination and proteasomal-mediated degradation. Interacts (via TPRs 1-6) with SIN3A; the interaction mediates transcriptional repression in parallel with histone deacetylase. Interacts (via TPR 5-6) with TET1, TET2 and TET3. Interacts (via TPR repeats 6 and 7) with ATXN10. Interacts with NSD2. Interacts with PROSER1; this interaction mediates TET2 O-GlcNAcylation and stability by promoting the interaction between OGT and TET2. As to quaternary structure, interacts with USP7. (Microbial infection) Interacts with human T-cell leukemia virus 1/HTLV-1 protein Tax; this interaction increases Tax interacting partner CREB1 O-GlcNAcylation. Post-translationally, ubiquitinated by the SCF(FBXO31) complex, leading to its proteasomal degradation. In terms of processing, phosphorylation on Ser-3 or Ser-4 by GSK3-beta positively regulates its activity. Phosphorylation at Thr-454 by AMPK promotes nuclear localization. Glycosylated via autocatalysis; O-GlcNAcylation at Ser-399 promotes nuclear localization. Post-translationally, glycosylated via autocatalysis; does not affect the enzyme activity but regulates substrate selectivity. In terms of tissue distribution, highly expressed in pancreas and to a lesser extent in skeletal muscle, heart, brain and placenta. Present in trace amounts in lung and liver.

Its subcellular location is the nucleus. The protein localises to the cytoplasm. It localises to the mitochondrion. It is found in the membrane. The protein resides in the cell membrane. Its subcellular location is the mitochondrion membrane. The protein localises to the cell projection. The catalysed reaction is L-seryl-[protein] + UDP-N-acetyl-alpha-D-glucosamine = 3-O-(N-acetyl-beta-D-glucosaminyl)-L-seryl-[protein] + UDP + H(+). The enzyme catalyses L-threonyl-[protein] + UDP-N-acetyl-alpha-D-glucosamine = 3-O-(N-acetyl-beta-D-glucosaminyl)-L-threonyl-[protein] + UDP + H(+). Its pathway is protein modification; protein glycosylation. Its activity is regulated as follows. Subject to product inhibition by UDP. Functionally, catalyzes the transfer of a single N-acetylglucosamine from UDP-GlcNAc to a serine or threonine residue in cytoplasmic and nuclear proteins resulting in their modification with a beta-linked N-acetylglucosamine (O-GlcNAc). Glycosylates a large and diverse number of proteins including histone H2B, AKT1, AMPK, ATG4B, CAPRIN1, EZH2, FNIP1, GSDMD, KRT7, LMNA, LMNB1, LMNB2, RPTOR, HOXA1, PFKL, KMT2E/MLL5, MAPT/TAU, TET2, RBL2, RET, NOD2 and HCFC1. Can regulate their cellular processes via cross-talk between glycosylation and phosphorylation or by affecting proteolytic processing. Involved in insulin resistance in muscle and adipocyte cells via glycosylating insulin signaling components and inhibiting the 'Thr-308' phosphorylation of AKT1, enhancing IRS1 phosphorylation and attenuating insulin signaling. Involved in glycolysis regulation by mediating glycosylation of 6-phosphofructokinase PFKL, inhibiting its activity. Plays a key role in chromatin structure by mediating O-GlcNAcylation of 'Ser-112' of histone H2B: recruited to CpG-rich transcription start sites of active genes via its interaction with TET proteins (TET1, TET2 or TET3). As part of the NSL complex indirectly involved in acetylation of nucleosomal histone H4 on several lysine residues. O-GlcNAcylation of 'Ser-75' of EZH2 increases its stability, and facilitating the formation of H3K27me3 by the PRC2/EED-EZH2 complex. Stabilizes KMT2E/MLL5 by mediating its glycosylation, thereby preventing KMT2E/MLL5 ubiquitination. Regulates circadian oscillation of the clock genes and glucose homeostasis in the liver. Stabilizes clock proteins BMAL1 and CLOCK through O-glycosylation, which prevents their ubiquitination and subsequent degradation. Promotes the CLOCK-BMAL1-mediated transcription of genes in the negative loop of the circadian clock such as PER1/2 and CRY1/2. O-glycosylates HCFC1 and regulates its proteolytic processing and transcriptional activity. Component of a THAP1/THAP3-HCFC1-OGT complex that is required for the regulation of the transcriptional activity of RRM1. Regulates mitochondrial motility in neurons by mediating glycosylation of TRAK1. Promotes autophagy by mediating O-glycosylation of ATG4B. Acts as a regulator of mTORC1 signaling by mediating O-glycosylation of RPTOR and FNIP1: O-GlcNAcylation of RPTOR in response to glucose sufficiency promotes activation of the mTORC1 complex. Its function is as follows. The mitochondrial isoform (mOGT) is cytotoxic and triggers apoptosis in several cell types including INS1, an insulinoma cell line. In terms of biological role, has N-acetylglucosaminyltransferase activity: glycosylates proteins, such as HNRNPU, NEUROD1, NUP62 and PDCD6IP. Displays specific substrate selectivity compared to other isoforms. The polypeptide is UDP-N-acetylglucosamine--peptide N-acetylglucosaminyltransferase 110 kDa subunit (Homo sapiens (Human)).